We begin with the raw amino-acid sequence, 220 residues long: Large ribosomal subunit protein uL1 (220 aa).

This sequence belongs to the universal ribosomal protein uL1 family. In terms of assembly, part of the 50S ribosomal subunit.

Functionally, binds directly to 23S rRNA. The L1 stalk is quite mobile in the ribosome, and is involved in E site tRNA release. Its function is as follows. Protein L1 is also a translational repressor protein, it controls the translation of the L11 operon by binding to its mRNA. The chain is Large ribosomal subunit protein uL1 from Ehrlichia canis (strain Jake).